The following is a 316-amino-acid chain: Putative mannose-6-phosphate isomerase YvyI (316 aa).

Residues His-98, Glu-116, and His-173 each coordinate Zn(2+). The active site involves Arg-193.

Belongs to the mannose-6-phosphate isomerase type 1 family. It depends on Zn(2+) as a cofactor.

The enzyme catalyses D-mannose 6-phosphate = D-fructose 6-phosphate. This Bacillus subtilis (strain 168) protein is Putative mannose-6-phosphate isomerase YvyI (yvyI).